The sequence spans 669 residues: NADH-ubiquinone oxidoreductase chain 5 (669 aa).

15 helical membrane passes run 3–23 (LLIV…GRFL), 50–70 (VALC…SELF), 81–100 (LTVI…HIYS), 119–139 (IFTF…LFLG), 178–198 (LALG…STIF), 211–231 (FLFC…VFIG), 253–273 (TPVS…FMIA), 286–306 (LIVI…TGIL), 322–342 (LGYM…FHLM), 377–397 (LLPF…GFPF), 423–443 (FWLG…LLFL), 464–484 (ILMA…GYLA), 522–542 (LIPI…NFVV), 628–648 (AFVM…WDFI), and 649–669 (SFWV…FINI).

This sequence belongs to the complex I subunit 5 family.

It localises to the mitochondrion inner membrane. The enzyme catalyses a ubiquinone + NADH + 5 H(+)(in) = a ubiquinol + NAD(+) + 4 H(+)(out). In terms of biological role, core subunit of the mitochondrial membrane respiratory chain NADH dehydrogenase (Complex I) that is believed to belong to the minimal assembly required for catalysis. Complex I functions in the transfer of electrons from NADH to the respiratory chain. The immediate electron acceptor for the enzyme is believed to be ubiquinone. In Marchantia polymorpha (Common liverwort), this protein is NADH-ubiquinone oxidoreductase chain 5 (ND5).